We begin with the raw amino-acid sequence, 342 residues long: Succinylglutamate desuccinylase (342 aa).

Residues histidine 62, glutamate 65, and histidine 158 each coordinate Zn(2+). Residue glutamate 222 is part of the active site.

It belongs to the AspA/AstE family. Succinylglutamate desuccinylase subfamily. Requires Zn(2+) as cofactor.

The enzyme catalyses N-succinyl-L-glutamate + H2O = L-glutamate + succinate. The protein operates within amino-acid degradation; L-arginine degradation via AST pathway; L-glutamate and succinate from L-arginine: step 5/5. Transforms N(2)-succinylglutamate into succinate and glutamate. This Shewanella frigidimarina (strain NCIMB 400) protein is Succinylglutamate desuccinylase.